The chain runs to 297 residues: Heme A synthase (297 aa).

Residues 1–6 lie on the Cytoplasmic side of the membrane; that stretch reads MNRKLS. Residues 7 to 27 form a helical membrane-spanning segment; sequence IFSAFVTFTMMIVLLMGGTVT. The Extracellular segment spans residues 28–62; sequence KTDSGNGCGTDWPLCHGELIPTNPSVETMIEYSHR. Cys35 and Cys42 are disulfide-bonded. The active site involves Glu58. Heme o is bound at residue His61. The helical transmembrane segment at 63-83 threads the bilayer; that stretch reads AVTGVVGLLIIALCLWTLVAF. Residues 84 to 90 lie on the Cytoplasmic side of the membrane; that stretch reads KDRLDIK. The chain crosses the membrane as a helical span at residues 91–111; it reads IFAFLAFIFMLIQSIVGAGAV. At 112-121 the chain is on the extracellular side; it reads VWQQSDLVMA. The helical transmembrane segment at 122-142 threads the bilayer; sequence LHFGISLISFASLLILTILIM. Position 123 (His123) interacts with heme o. Residues 143–160 are Cytoplasmic-facing; that stretch reads ERSGQEFRESVPAFLRKL. Residues 161 to 181 traverse the membrane as a helical segment; it reads LYGLLIYTLIVVYTGAFVRHV. At 182-201 the chain is on the extracellular side; the sequence is GATYACVGWPVCSQPTMTFE. Cys187 and Cys193 are disulfide-bonded. A helical transmembrane segment spans residues 202-222; it reads AWVQMIHRILAGLLFFYTLFV. A heme b-binding site is contributed by His208. Topologically, residues 223 to 236 are cytoplasmic; it reads HYTAIRLKHRTSRT. A helical membrane pass occupies residues 237–257; the sequence is GMLFATFFISCQVATGAWIVL. Over 258 to 262 the chain is Extracellular; that stretch reads GGHAT. The helical transmembrane segment at 263 to 283 threads the bilayer; the sequence is YVPLLHAFLITCYFGVISYLA. His268 is a heme b binding site. The Cytoplasmic segment spans residues 284–297; that stretch reads YHAFRTRKKDSRLR.

Belongs to the COX15/CtaA family. Type 1 subfamily. Interacts with CtaB. It depends on heme b as a cofactor.

The protein resides in the cell membrane. The enzyme catalyses Fe(II)-heme o + 2 A + H2O = Fe(II)-heme a + 2 AH2. It functions in the pathway porphyrin-containing compound metabolism; heme A biosynthesis; heme A from heme O: step 1/1. Catalyzes the conversion of heme O to heme A by two successive hydroxylations of the methyl group at C8. The first hydroxylation forms heme I, the second hydroxylation results in an unstable dihydroxymethyl group, which spontaneously dehydrates, resulting in the formyl group of heme A. The protein is Heme A synthase of Exiguobacterium sibiricum (strain DSM 17290 / CCUG 55495 / CIP 109462 / JCM 13490 / 255-15).